Here is a 171-residue protein sequence, read N- to C-terminus: UPF0303 protein YPK_1581 (171 aa).

This sequence belongs to the UPF0303 family.

In Yersinia pseudotuberculosis serotype O:3 (strain YPIII), this protein is UPF0303 protein YPK_1581.